Here is a 505-residue protein sequence, read N- to C-terminus: Glutamate--tRNA ligase (505 aa).

A 'HIGH' region motif is present at residues 12–22 (PSPTGDPHVGT). Residues 253–257 (KLSKR) carry the 'KMSKS' region motif. Lys256 is a binding site for ATP.

This sequence belongs to the class-I aminoacyl-tRNA synthetase family. Glutamate--tRNA ligase type 1 subfamily. In terms of assembly, monomer.

The protein localises to the cytoplasm. The catalysed reaction is tRNA(Glu) + L-glutamate + ATP = L-glutamyl-tRNA(Glu) + AMP + diphosphate. Functionally, catalyzes the attachment of glutamate to tRNA(Glu) in a two-step reaction: glutamate is first activated by ATP to form Glu-AMP and then transferred to the acceptor end of tRNA(Glu). In Chlamydia abortus (strain DSM 27085 / S26/3) (Chlamydophila abortus), this protein is Glutamate--tRNA ligase.